Reading from the N-terminus, the 732-residue chain is Catalase-peroxidase (732 aa).

The segment at residues 97 to 220 is a cross-link (tryptophyl-tyrosyl-methioninium (Trp-Tyr) (with M-246)); sequence WHSAGTYRTS…LAAVQMGLIY (124 aa). H98 acts as the Proton acceptor in catalysis. The tryptophyl-tyrosyl-methioninium (Tyr-Met) (with W-97) cross-link spans 220-246; that stretch reads YVNPEGPDGNPDPVAAGRDIRETFARM. H261 is a binding site for heme b.

Belongs to the peroxidase family. Peroxidase/catalase subfamily. As to quaternary structure, homodimer or homotetramer. Requires heme b as cofactor. Formation of the three residue Trp-Tyr-Met cross-link is important for the catalase, but not the peroxidase activity of the enzyme.

The enzyme catalyses H2O2 + AH2 = A + 2 H2O. The catalysed reaction is 2 H2O2 = O2 + 2 H2O. Bifunctional enzyme with both catalase and broad-spectrum peroxidase activity. The protein is Catalase-peroxidase of Chlorobium phaeobacteroides (strain DSM 266 / SMG 266 / 2430).